Reading from the N-terminus, the 47-residue chain is Short transmembrane mitochondrial protein 1 (47 aa).

Residues 7-23 form a helical membrane-spanning segment; that stretch reads GFTLGNVVGMYLAQNYD.

This sequence belongs to the STMP1 family. In terms of assembly, interacts with components of the ubiquinol-cytochrome c oxidoreductase (cytochrome b-c1 complex, complex III, CIII), such as UQCRC1/QCR1, UQCRC2/QCR2 and UQCR10/QCR9. Interacts with components of the cytochrome c oxidase (mitochondrial respiratory chain complex IV) complex, such as MT-CO2. In terms of tissue distribution, expressed in monocytes and dendritic cells.

Its subcellular location is the mitochondrion inner membrane. The protein localises to the mitochondrion outer membrane. It localises to the mitochondrion intermembrane space. Microprotein involved in mitochondrial respiratory chain complex III (ubiquinol-cytochrome c oxidoreductase) and complex IV (mitochondrial cytochrome c oxidase complex) assembly. Required for the formation of mitochondrial supercomplexes (SCs). Also required for the activation of the NLRP3 inflammasome. In Homo sapiens (Human), this protein is Short transmembrane mitochondrial protein 1.